A 115-amino-acid chain; its full sequence is Protein Rev (115 aa).

Ser-5 and Ser-8 each carry phosphoserine; by host CK2. The interval 18–26 (LIKFLYQSN) is homomultimerization. A disordered region spans residues 23 to 48 (YQSNPPPSSEGTRQARRNRRRRWRER). A Nuclear localization signal and RNA-binding (RRE) motif is present at residues 34-50 (TRQARRNRRRRWRERQR). A compositionally biased stretch (basic residues) spans 36-48 (QARRNRRRRWRER). Positions 73 to 83 (LQLPPQRLTLD) match the Nuclear export signal and binding to XPO1 motif. The disordered stretch occupies residues 89–115 (GTSGTQGVGSPQILVESPTVLESGTKE). Phosphoserine; by host occurs at positions 91 and 98.

The protein belongs to the HIV-1 REV protein family. In terms of assembly, homomultimer; when bound to the RRE. Multimeric assembly is essential for activity and may involve XPO1. Binds to human KPNB1, XPO1, TNPO1, RANBP5 and IPO7. Interacts with the viral Integrase. Interacts with human KHDRBS1. Interacts with human NAP1; this interaction decreases Rev multimerization and stimulates its activity. Interacts with human DEAD-box helicases DDX3 and DDX24; these interactions may serve for viral RNA export to the cytoplasm and packaging, respectively. Interacts with human PSIP1; this interaction may inhibit HIV-1 DNA integration by promoting dissociation of the Integrase-LEDGF/p75 complex. Asymmetrically arginine dimethylated at one site by host PRMT6. Methylation impairs the RNA-binding activity and export of viral RNA from the nucleus to the cytoplasm. Post-translationally, phosphorylated by protein kinase CK2. Presence of, and maybe binding to the N-terminus of the regulatory beta subunit of CK2 is necessary for CK2-mediated Rev's phosphorylation.

Its subcellular location is the host nucleus. It is found in the host nucleolus. It localises to the host cytoplasm. In terms of biological role, escorts unspliced or incompletely spliced viral pre-mRNAs (late transcripts) out of the nucleus of infected cells. These pre-mRNAs carry a recognition sequence called Rev responsive element (RRE) located in the env gene, that is not present in fully spliced viral mRNAs (early transcripts). This function is essential since most viral proteins are translated from unspliced or partially spliced pre-mRNAs which cannot exit the nucleus by the pathway used by fully processed cellular mRNAs. Rev itself is translated from a fully spliced mRNA that readily exits the nucleus. Rev's nuclear localization signal (NLS) binds directly to KPNB1/Importin beta-1 without previous binding to KPNA1/Importin alpha-1. KPNB1 binds to the GDP bound form of RAN (Ran-GDP) and targets Rev to the nucleus. In the nucleus, the conversion from Ran-GDP to Ran-GTP dissociates Rev from KPNB1 and allows Rev's binding to the RRE in viral pre-mRNAs. Rev multimerization on the RRE via cooperative assembly exposes its nuclear export signal (NES) to the surface. Rev can then form a complex with XPO1/CRM1 and Ran-GTP, leading to nuclear export of the complex. Conversion from Ran-GTP to Ran-GDP mediates dissociation of the Rev/RRE/XPO1/RAN complex, so that Rev can return to the nucleus for a subsequent round of export. Beside KPNB1, also seems to interact with TNPO1/Transportin-1, RANBP5/IPO5 and IPO7/RANBP7 for nuclear import. The nucleoporin-like HRB/RIP is an essential cofactor that probably indirectly interacts with Rev to release HIV RNAs from the perinuclear region to the cytoplasm. In Human immunodeficiency virus type 1 group M subtype B (isolate MN) (HIV-1), this protein is Protein Rev.